The sequence spans 531 residues: T-complex protein 1 subunit zeta (531 aa).

A2 carries the N-acetylalanine modification. K5 is modified (N6-acetyllysine). G39 contacts ADP. G39 lines the ATP pocket. Position 90 (D90) interacts with Mg(2+). G91, T92, T93, S94, T158, and K159 together coordinate ADP. ATP is bound by residues G91, T92, and T93. K199 carries the N6-acetyllysine modification. S205 carries the post-translational modification Phosphoserine. K251 is covalently cross-linked (Glycyl lysine isopeptide (Lys-Gly) (interchain with G-Cter in SUMO2)). 4 positions are modified to N6-acetyllysine: K287, K365, K377, and K388. Residue A411 participates in ADP binding. Positions 411, 412, 496, and 501 each coordinate ATP. Position 496 (D496) interacts with ADP.

It belongs to the TCP-1 chaperonin family. Component of the chaperonin-containing T-complex (TRiC), a hexadecamer composed of two identical back-to-back stacked rings enclosing a protein folding chamber. Each ring is made up of eight different subunits: TCP1/CCT1, CCT2, CCT3, CCT4, CCT5, CCT6A/CCT6, CCT7, CCT8. Interacts with PACRG.

Its subcellular location is the cytoplasm. The enzyme catalyses ATP + H2O = ADP + phosphate + H(+). Component of the chaperonin-containing T-complex (TRiC), a molecular chaperone complex that assists the folding of actin, tubulin and other proteins upon ATP hydrolysis. The TRiC complex mediates the folding of WRAP53/TCAB1, thereby regulating telomere maintenance. The chain is T-complex protein 1 subunit zeta (CCT6) from Pongo abelii (Sumatran orangutan).